The following is a 495-amino-acid chain: Probable cytosol aminopeptidase (495 aa).

The Mn(2+) site is built by lysine 258 and aspartate 263. The active site involves lysine 270. Residues aspartate 281, aspartate 340, and glutamate 342 each contribute to the Mn(2+) site. Arginine 344 is a catalytic residue.

The protein belongs to the peptidase M17 family. The cofactor is Mn(2+).

The protein resides in the cytoplasm. The catalysed reaction is Release of an N-terminal amino acid, Xaa-|-Yaa-, in which Xaa is preferably Leu, but may be other amino acids including Pro although not Arg or Lys, and Yaa may be Pro. Amino acid amides and methyl esters are also readily hydrolyzed, but rates on arylamides are exceedingly low.. The enzyme catalyses Release of an N-terminal amino acid, preferentially leucine, but not glutamic or aspartic acids.. Functionally, presumably involved in the processing and regular turnover of intracellular proteins. Catalyzes the removal of unsubstituted N-terminal amino acids from various peptides. The sequence is that of Probable cytosol aminopeptidase from Leptospira interrogans serogroup Icterohaemorrhagiae serovar Lai (strain 56601).